A 431-amino-acid chain; its full sequence is tRNA(Ile)-lysidine synthase (431 aa).

An ATP-binding site is contributed by 20-25 (SGGLDS).

Belongs to the tRNA(Ile)-lysidine synthase family.

Its subcellular location is the cytoplasm. It carries out the reaction cytidine(34) in tRNA(Ile2) + L-lysine + ATP = lysidine(34) in tRNA(Ile2) + AMP + diphosphate + H(+). In terms of biological role, ligates lysine onto the cytidine present at position 34 of the AUA codon-specific tRNA(Ile) that contains the anticodon CAU, in an ATP-dependent manner. Cytidine is converted to lysidine, thus changing the amino acid specificity of the tRNA from methionine to isoleucine. This Escherichia coli O157:H7 protein is tRNA(Ile)-lysidine synthase.